Here is a 244-residue protein sequence, read N- to C-terminus: MSKLDLNALNELPKVDRILALAETNAQLEKLDAEGRVAWALDNLPGEYVLSSSFGIQAAVSLHLVNQICPDIPVILTDTGYLFPETYRFIDELTDKLKLNLKVYRATESAAWQEARYGKLWEQGVEGIEKYNDINKVEPMNRALKELNAQTWFAGLRREQSGSRANLPVLAIQRGVFKVLPIIDWDNRTIYQYLQKHGLKYHPLWDEGYLSVGDTHTTRKWEPSMAEEETRFFGLKRECGLHEG.

Cys239 (nucleophile; cysteine thiosulfonate intermediate) is an active-site residue.

Belongs to the PAPS reductase family. CysH subfamily.

The protein resides in the cytoplasm. The catalysed reaction is [thioredoxin]-disulfide + sulfite + adenosine 3',5'-bisphosphate + 2 H(+) = [thioredoxin]-dithiol + 3'-phosphoadenylyl sulfate. The protein operates within sulfur metabolism; hydrogen sulfide biosynthesis; sulfite from sulfate: step 3/3. In terms of biological role, catalyzes the formation of sulfite from phosphoadenosine 5'-phosphosulfate (PAPS) using thioredoxin as an electron donor. The chain is Phosphoadenosine 5'-phosphosulfate reductase from Shigella dysenteriae serotype 1 (strain Sd197).